A 141-amino-acid polypeptide reads, in one-letter code: Hemoglobin subunit alpha (141 aa).

Residues 1-141 (VLSAADKTNV…VSTVLTSKYR (141 aa)) form the Globin domain. A Phosphoserine modification is found at S3. K7 bears the N6-succinyllysine mark. T8 is modified (phosphothreonine). Position 11 is an N6-succinyllysine (K11). K16 carries the N6-acetyllysine; alternate modification. K16 bears the N6-succinyllysine; alternate mark. Y24 carries the post-translational modification Phosphotyrosine. S35 is subject to Phosphoserine. The residue at position 40 (K40) is an N6-succinyllysine. S49 is subject to Phosphoserine. H58 contacts O2. H87 serves as a coordination point for heme b. S102 carries the post-translational modification Phosphoserine. T108 carries the post-translational modification Phosphothreonine. A phosphoserine mark is found at S124 and S131. A phosphothreonine mark is found at T134 and T137. Position 138 is a phosphoserine (S138).

Belongs to the globin family. In terms of assembly, heterotetramer of two alpha chains and two beta chains. In terms of tissue distribution, red blood cells.

Functionally, involved in oxygen transport from the lung to the various peripheral tissues. In Tamiasciurus hudsonicus (American red squirrel), this protein is Hemoglobin subunit alpha.